The following is a 259-amino-acid chain: DNA repair protein RecO (259 aa).

The protein belongs to the RecO family.

Functionally, involved in DNA repair and RecF pathway recombination. The chain is DNA repair protein RecO from Rhizobium rhizogenes (strain K84 / ATCC BAA-868) (Agrobacterium radiobacter).